The chain runs to 168 residues: Repressed By RIM101 protein 2 (168 aa).

The signal sequence occupies residues 1–24 (MRFAFTTVSLSLLLSSLVASDAAS). Residue asparagine 83 is glycosylated (N-linked (GlcNAc...) asparagine). Residues 111-149 (SGSASGSGSAKSTASAEKSSGSSASASSTAGGSSSKGGV) are disordered. Serine 143 carries the GPI-anchor amidated serine lipid modification. The propeptide at 144-168 (SSKGGVSELVAPVGAVVGALAVALM) is removed in mature form.

Belongs to the SRP1/TIP1 family. Post-translationally, the GPI-anchor is attached to the protein in the endoplasmic reticulum and serves to target the protein to the cell surface. There, the glucosamine-inositol phospholipid moiety is cleaved off and the GPI-modified mannoprotein is covalently attached via its lipidless GPI glycan remnant to the 1,6-beta-glucan of the outer cell wall layer.

Its subcellular location is the secreted. It is found in the cell wall. It localises to the membrane. Probable cell wall protein which may have esterase activity, with a preference for esters of fatty acids from 4 to 16 carbon atoms. The chain is Repressed By RIM101 protein 2 (RBR2) from Candida albicans (strain SC5314 / ATCC MYA-2876) (Yeast).